The chain runs to 331 residues: UDP-xylose and UDP-N-acetylglucosamine transporter (331 aa).

The next 10 helical transmembrane spans lie at 5–25 (FAVTLVFVGCCSNVVFLELLV), 30–50 (GCGNIVTFAQFAFIALEGFIF), 59–79 (PQIPLSNYVIMVTMFFTVSVI), 92–112 (LHMIFRSGSLIANMILGIIIL), 122–142 (LSIVLVSVGIFICTIMSAKQV), 153–173 (GVYAFMHWLLGIAMLTFALLM), 201–221 (CLPLPGFLLLSTNIYNHAVLF), 238–260 (VMWFYLLMNVITQYVCIRGVFIL), 267–289 (LTVTLVVTLRKFLSLIISILYFQ), and 301–321 (AVVFLGTLLYTEVLSSIPAAF).

It belongs to the nucleotide-sugar transporter family. SLC35B subfamily.

Its subcellular location is the golgi apparatus membrane. Functionally, sugar transporter that specifically mediates the transport of UDP-xylose (UDP-Xyl) and UDP-N-acetylglucosamine (UDP-GlcNAc) from cytosol into Golgi. The protein is UDP-xylose and UDP-N-acetylglucosamine transporter (slc35b4) of Danio rerio (Zebrafish).